The chain runs to 214 residues: Ras-related protein Rab2BV (214 aa).

19 to 26 is a GTP binding site; the sequence is GDSGVGKS. The Effector region signature appears at 41-49; the sequence is SKSTIGVEF. GTP-binding positions include 67–71 and 125–128; these read DTAGQ and NKSD. 2 S-geranylgeranyl cysteine lipidation sites follow: cysteine 211 and cysteine 212.

It belongs to the small GTPase superfamily. Rab family.

It is found in the cell membrane. The polypeptide is Ras-related protein Rab2BV (RAB2BV) (Beta vulgaris (Sugar beet)).